The chain runs to 578 residues: Isocitrate dehydrogenase kinase/phosphatase (578 aa).

ATP is bound by residues 315–321 (APGIRGM) and lysine 336. Aspartate 371 is a catalytic residue.

It belongs to the AceK family.

The protein localises to the cytoplasm. The enzyme catalyses L-seryl-[isocitrate dehydrogenase] + ATP = O-phospho-L-seryl-[isocitrate dehydrogenase] + ADP + H(+). Its function is as follows. Bifunctional enzyme which can phosphorylate or dephosphorylate isocitrate dehydrogenase (IDH) on a specific serine residue. This is a regulatory mechanism which enables bacteria to bypass the Krebs cycle via the glyoxylate shunt in response to the source of carbon. When bacteria are grown on glucose, IDH is fully active and unphosphorylated, but when grown on acetate or ethanol, the activity of IDH declines drastically concomitant with its phosphorylation. This chain is Isocitrate dehydrogenase kinase/phosphatase, found in Escherichia coli (strain K12 / MC4100 / BW2952).